The primary structure comprises 292 residues: Elongation factor Ts (292 aa).

An involved in Mg(2+) ion dislocation from EF-Tu region spans residues Thr-80–Val-83.

It belongs to the EF-Ts family.

It localises to the cytoplasm. Its function is as follows. Associates with the EF-Tu.GDP complex and induces the exchange of GDP to GTP. It remains bound to the aminoacyl-tRNA.EF-Tu.GTP complex up to the GTP hydrolysis stage on the ribosome. This Ralstonia pickettii (strain 12J) protein is Elongation factor Ts.